The following is a 449-amino-acid chain: UMP-CMP kinase 2, mitochondrial (449 aa).

The N-terminal 98 residues, 1 to 98 (MAFARRLLRG…VRAARLHQRL (98 aa)), are a transit peptide targeting the mitochondrion. 259 to 266 (GLDATGKT) contacts ATP. Positions 380-412 (EERLQRLQGRGMEKTREEAELEANSVFRQKVEM) form a coiled coil.

The protein belongs to the thymidylate kinase family. As to expression, high levels are observed in myeloid, lymphoid and mesenchymal tissues.

It localises to the mitochondrion. It carries out the reaction CMP + ATP = CDP + ADP. It catalyses the reaction dCMP + ATP = dCDP + ADP. The catalysed reaction is a 2'-deoxyribonucleoside 5'-diphosphate + ATP = a 2'-deoxyribonucleoside 5'-triphosphate + ADP. The enzyme catalyses a ribonucleoside 5'-diphosphate + ATP = a ribonucleoside 5'-triphosphate + ADP. Its function is as follows. Mitochondrial nucleotide monophosphate kinase needed for salvage dNTP synthesis that mediates immunomodulatory and antiviral activities through IFN-dependent and IFN-independent pathways. Restricts the replication of multiple viruses including flaviviruses or coronaviruses. Together with viperin/RSAD2 and ddhCTP, suppresses the replication of several coronaviruses through inhibition of the viral RNA-dependent RNA polymerase activities. Concerning flaviviruses, restricts RNA translation when localized to the mitochondria independently of its kinase activity. Is able to phosphorylate dUMP, dCMP, CMP, UMP and monophosphates of the pyrimidine nucleoside analogs ddC, dFdC, araC, BVDU and FdUrd with ATP as phosphate donor. Efficacy is highest for dUMP followed by dCMP while CMP and UMP are poor substrates. Controls therefore mitochondrial DNA synthesis by supplying required deoxyribonucleotides. CMPK2-dependent mitochondrial DNA synthesis is necessary for the production of oxidized mitochondrial DNA fragments after exposure to NLRP3 activators. In turn, cytosolic oxidized mtDNA associates with the NLRP3 inflammasome complex and is required for its activation. The polypeptide is UMP-CMP kinase 2, mitochondrial (CMPK2) (Homo sapiens (Human)).